Here is a 443-residue protein sequence, read N- to C-terminus: Phosphoglucosamine mutase (443 aa).

The active-site Phosphoserine intermediate is the Ser101. 4 residues coordinate Mg(2+): Ser101, Asp239, Asp241, and Asp243. Ser101 carries the phosphoserine modification.

This sequence belongs to the phosphohexose mutase family. Mg(2+) serves as cofactor. Activated by phosphorylation.

The enzyme catalyses alpha-D-glucosamine 1-phosphate = D-glucosamine 6-phosphate. Functionally, catalyzes the conversion of glucosamine-6-phosphate to glucosamine-1-phosphate. The sequence is that of Phosphoglucosamine mutase from Francisella tularensis subsp. tularensis (strain FSC 198).